Here is an 89-residue protein sequence, read N- to C-terminus: Small ribosomal subunit protein uS15 (89 aa).

This sequence belongs to the universal ribosomal protein uS15 family. As to quaternary structure, part of the 30S ribosomal subunit. Forms a bridge to the 50S subunit in the 70S ribosome, contacting the 23S rRNA.

Functionally, one of the primary rRNA binding proteins, it binds directly to 16S rRNA where it helps nucleate assembly of the platform of the 30S subunit by binding and bridging several RNA helices of the 16S rRNA. Forms an intersubunit bridge (bridge B4) with the 23S rRNA of the 50S subunit in the ribosome. This Jannaschia sp. (strain CCS1) protein is Small ribosomal subunit protein uS15.